The primary structure comprises 71 residues: Conotoxin Pl071 (71 aa).

The first 20 residues, 1 to 20, serve as a signal peptide directing secretion; the sequence is MSRLFMILLVICVITLGTDA. Positions 21–31 are excised as a propeptide; that stretch reads SQAEDSGTEKR. Tyr69 is modified (tyrosine amide).

It belongs to the conotoxin NSf-1 superfamily. In terms of tissue distribution, expressed by the venom duct.

It is found in the secreted. Probable neurotoxin with unknown target. Possibly targets ion channels. The polypeptide is Conotoxin Pl071 (Conus planorbis (Planorbis cone)).